A 610-amino-acid chain; its full sequence is Butyryl-CoA dehydrogenase Swol_2052 (610 aa).

Glu-451 serves as the catalytic Proton acceptor.

The protein belongs to the acyl-CoA dehydrogenase family. FAD serves as cofactor.

The protein localises to the cytoplasm. The catalysed reaction is butanoyl-CoA + oxidized [electron-transfer flavoprotein] + H(+) = (2E)-butenoyl-CoA + reduced [electron-transfer flavoprotein]. It catalyses the reaction a short-chain 2,3-saturated fatty acyl-CoA + oxidized [electron-transfer flavoprotein] + H(+) = a short-chain (2E)-enoyl-CoA + reduced [electron-transfer flavoprotein]. It participates in lipid metabolism; butanoate metabolism. Involved in syntrophic growth of S.wolfei with butyrate, as part of the butyrate oxidation pathway. Catalyzes the oxidation of butanoyl-CoA to crotonyl-CoA. Probably passes the electrons released by this reaction on to electron-transfer flavoproteins (EtfAB) to finally generate hydrogen and/or formate. The protein is Butyryl-CoA dehydrogenase Swol_2052 of Syntrophomonas wolfei subsp. wolfei (strain DSM 2245B / Goettingen).